We begin with the raw amino-acid sequence, 365 residues long: Isopentenyl-diphosphate delta-isomerase (365 aa).

A substrate-binding site is contributed by 8–9 (RK). FMN-binding positions include 67 to 69 (SIT), Ser97, and Asn126. Substrate is bound at residue 97–99 (SQR). Residue Gln160 participates in substrate binding. Glu161 contributes to the Mg(2+) binding site. FMN-binding positions include Lys192, Thr222, 272 to 274 (GIR), and 293 to 294 (AL).

This sequence belongs to the IPP isomerase type 2 family. In terms of assembly, homooctamer. Dimer of tetramers. FMN is required as a cofactor. Requires NADPH as cofactor. It depends on Mg(2+) as a cofactor.

The protein localises to the cytoplasm. It carries out the reaction isopentenyl diphosphate = dimethylallyl diphosphate. Functionally, involved in the biosynthesis of isoprenoids. Catalyzes the 1,3-allylic rearrangement of the homoallylic substrate isopentenyl (IPP) to its allylic isomer, dimethylallyl diphosphate (DMAPP). The sequence is that of Isopentenyl-diphosphate delta-isomerase from Methanosarcina barkeri (strain Fusaro / DSM 804).